The sequence spans 492 residues: Cobyric acid synthase (492 aa).

One can recognise a GATase cobBQ-type domain in the interval 253 to 441 (VLKVIAPVYP…LHGLFDTPQA (189 aa)). Cys-334 serves as the catalytic Nucleophile. Residue His-433 is part of the active site.

The protein belongs to the CobB/CobQ family. CobQ subfamily.

It functions in the pathway cofactor biosynthesis; adenosylcobalamin biosynthesis. Functionally, catalyzes amidations at positions B, D, E, and G on adenosylcobyrinic A,C-diamide. NH(2) groups are provided by glutamine, and one molecule of ATP is hydrogenolyzed for each amidation. This Azoarcus sp. (strain BH72) protein is Cobyric acid synthase.